Consider the following 138-residue polypeptide: Large ribosomal subunit protein uL16 (138 aa).

This sequence belongs to the universal ribosomal protein uL16 family. Part of the 50S ribosomal subunit.

In terms of biological role, binds 23S rRNA and is also seen to make contacts with the A and possibly P site tRNAs. In Anaeromyxobacter sp. (strain Fw109-5), this protein is Large ribosomal subunit protein uL16.